Consider the following 194-residue polypeptide: Peptidyl-tRNA hydrolase (194 aa).

A tRNA-binding site is contributed by Y17. The Proton acceptor role is filled by H22. Residues F69, N71, and N117 each coordinate tRNA.

It belongs to the PTH family. As to quaternary structure, monomer.

It is found in the cytoplasm. The enzyme catalyses an N-acyl-L-alpha-aminoacyl-tRNA + H2O = an N-acyl-L-amino acid + a tRNA + H(+). Functionally, hydrolyzes ribosome-free peptidyl-tRNAs (with 1 or more amino acids incorporated), which drop off the ribosome during protein synthesis, or as a result of ribosome stalling. In terms of biological role, catalyzes the release of premature peptidyl moieties from peptidyl-tRNA molecules trapped in stalled 50S ribosomal subunits, and thus maintains levels of free tRNAs and 50S ribosomes. The chain is Peptidyl-tRNA hydrolase from Renibacterium salmoninarum (strain ATCC 33209 / DSM 20767 / JCM 11484 / NBRC 15589 / NCIMB 2235).